The primary structure comprises 183 residues: ATP-dependent protease subunit HslV (183 aa).

Thr13 is a catalytic residue. Gly168, Cys171, and Thr174 together coordinate Na(+).

It belongs to the peptidase T1B family. HslV subfamily. In terms of assembly, a double ring-shaped homohexamer of HslV is capped on each side by a ring-shaped HslU homohexamer. The assembly of the HslU/HslV complex is dependent on binding of ATP.

It is found in the cytoplasm. It catalyses the reaction ATP-dependent cleavage of peptide bonds with broad specificity.. Its activity is regulated as follows. Allosterically activated by HslU binding. In terms of biological role, protease subunit of a proteasome-like degradation complex believed to be a general protein degrading machinery. The protein is ATP-dependent protease subunit HslV of Xylella fastidiosa (strain M23).